The following is a 188-amino-acid chain: Ribosome-recycling factor (188 aa).

The protein belongs to the RRF family.

The protein localises to the cytoplasm. Responsible for the release of ribosomes from messenger RNA at the termination of protein biosynthesis. May increase the efficiency of translation by recycling ribosomes from one round of translation to another. This chain is Ribosome-recycling factor, found in Anaeromyxobacter dehalogenans (strain 2CP-1 / ATCC BAA-258).